The sequence spans 442 residues: Proline--tRNA ligase (442 aa).

This sequence belongs to the class-II aminoacyl-tRNA synthetase family. ProS type 2 subfamily. Homodimer.

It localises to the cytoplasm. The enzyme catalyses tRNA(Pro) + L-proline + ATP = L-prolyl-tRNA(Pro) + AMP + diphosphate. Catalyzes the attachment of proline to tRNA(Pro) in a two-step reaction: proline is first activated by ATP to form Pro-AMP and then transferred to the acceptor end of tRNA(Pro). The chain is Proline--tRNA ligase from Rhizobium meliloti (strain 1021) (Ensifer meliloti).